The sequence spans 245 residues: Nucleoprotein (245 aa).

The RNA site is built by Y30, K67, R106, R186, and S196.

Belongs to the phlebovirus nucleocapsid protein family. Homodimer. Homohexamer; ring-shaped, necessary to form the nucleocapsid. Homopentamers; opened pentamers in solution. Binds to viral genomic RNA. Interacts with glycoprotein Gn; this interaction allows packaging of nucleocapsids into virions.

It is found in the virion. The protein resides in the host cytoplasm. It localises to the host nucleus. Its subcellular location is the host endoplasmic reticulum-Golgi intermediate compartment. The protein localises to the host Golgi apparatus. Functionally, encapsidates the genomic RNA, protecting it from nucleases. Displays high affinity for single-stranded nucleic acid. The encapsidated genomic RNA is termed the nucleocapsid (NC) or ribonucleoprotein. The ribonucleoprotein has a non-helical structure. Serves as template for viral transcription and replication. After replication, the nucleocapsid is recruited to the host Golgi apparatus by glycoprotein Gn for packaging into virus particles. This is Nucleoprotein (NP) from Dabie bandavirus (Severe fever with thrombocytopenia virus).